The sequence spans 91 residues: Small ribosomal subunit protein uS19 (91 aa).

It belongs to the universal ribosomal protein uS19 family.

Its function is as follows. Protein S19 forms a complex with S13 that binds strongly to the 16S ribosomal RNA. The polypeptide is Small ribosomal subunit protein uS19 (Synechococcus sp. (strain CC9605)).